The chain runs to 294 residues: Beta-lactamase (294 aa).

A signal peptide spans 1–27; that stretch reads MFKKRGRQTVLIAAVLAFFTASSPLLA. The active-site Acyl-ester intermediate is the Ser76. Glu174 (proton acceptor) is an active-site residue. 240 to 242 contributes to the substrate binding site; sequence KTG.

This sequence belongs to the class-A beta-lactamase family.

It catalyses the reaction a beta-lactam + H2O = a substituted beta-amino acid. The sequence is that of Beta-lactamase from Citrobacter koseri (Citrobacter diversus).